The primary structure comprises 227 residues: Ribose-5-phosphate isomerase A (227 aa).

Residues 26 to 29 (TGST), 82 to 85 (DGAD), and 95 to 98 (KGGG) each bind substrate. Residue Glu-104 is the Proton acceptor of the active site. Lys-122 contributes to the substrate binding site.

Belongs to the ribose 5-phosphate isomerase family. Homodimer.

The enzyme catalyses aldehydo-D-ribose 5-phosphate = D-ribulose 5-phosphate. It functions in the pathway carbohydrate degradation; pentose phosphate pathway; D-ribose 5-phosphate from D-ribulose 5-phosphate (non-oxidative stage): step 1/1. Catalyzes the reversible conversion of ribose-5-phosphate to ribulose 5-phosphate. The polypeptide is Ribose-5-phosphate isomerase A (Streptococcus pneumoniae (strain Hungary19A-6)).